Consider the following 260-residue polypeptide: 14-3-3-like protein C (260 aa).

This sequence belongs to the 14-3-3 family.

In Nicotiana tabacum (Common tobacco), this protein is 14-3-3-like protein C.